The following is a 295-amino-acid chain: Putative attaching and effacing protein homolog (295 aa).

A signal peptide spans 1–25 (MSHYKTGHKQPRFRYSVLARCVAWA).

Belongs to the intimin/invasin family.

The polypeptide is Putative attaching and effacing protein homolog (eaeH) (Escherichia coli (strain K12)).